Reading from the N-terminus, the 97-residue chain is Insertion element IS2 uncharacterized 11.1 kDa protein (97 aa).

In Escherichia coli, this protein is Insertion element IS2 uncharacterized 11.1 kDa protein.